Consider the following 60-residue polypeptide: Protein P7 (60 aa).

A helical membrane pass occupies residues 28–48 (FIGVTLIGMFISYYLYALISI).

The protein resides in the host membrane. The protein is Protein P7 of Vitis vinifera (Grape).